Here is an 855-residue protein sequence, read N- to C-terminus: Protein translocase subunit SecA (855 aa).

ATP is bound by residues Gln-85, 103–107, and Asp-492; that span reads GEGKT. The interval 794 to 845 is disordered; sequence AAIHEESSSAAAPGPGQNQPGGPGGPSAGPVAPVRNLDKHGRNELCPCGSGK. Positions 801–811 are enriched in low complexity; sequence SSAAAPGPGQN. Cys-839, Cys-841, Cys-850, and Cys-851 together coordinate Zn(2+).

It belongs to the SecA family. In terms of assembly, monomer and homodimer. Part of the essential Sec protein translocation apparatus which comprises SecA, SecYEG and auxiliary proteins SecDF. Other proteins may also be involved. Zn(2+) serves as cofactor.

Its subcellular location is the cell membrane. It localises to the cytoplasm. The enzyme catalyses ATP + H2O + cellular proteinSide 1 = ADP + phosphate + cellular proteinSide 2.. Functionally, part of the Sec protein translocase complex. Interacts with the SecYEG preprotein conducting channel. Has a central role in coupling the hydrolysis of ATP to the transfer of proteins into and across the cell membrane, serving as an ATP-driven molecular motor driving the stepwise translocation of polypeptide chains across the membrane. The protein is Protein translocase subunit SecA of Clostridium beijerinckii (strain ATCC 51743 / NCIMB 8052) (Clostridium acetobutylicum).